Consider the following 186-residue polypeptide: Probable GTP-binding protein EngB (186 aa).

One can recognise an EngB-type G domain in the interval 18–186 (DKVEICFIGR…LKKLLASEFK (169 aa)). GTP contacts are provided by residues 26 to 33 (GRSNVGKS), 52 to 56 (GRTQL), 70 to 73 (DLPG), 137 to 140 (TKID), and 166 to 168 (VSS). Mg(2+) contacts are provided by S33 and T54.

The protein belongs to the TRAFAC class TrmE-Era-EngA-EngB-Septin-like GTPase superfamily. EngB GTPase family. Mg(2+) is required as a cofactor.

Necessary for normal cell division and for the maintenance of normal septation. The protein is Probable GTP-binding protein EngB of Mycoplasmopsis pulmonis (strain UAB CTIP) (Mycoplasma pulmonis).